Here is a 512-residue protein sequence, read N- to C-terminus: Glutamate--tRNA ligase (512 aa).

The short motif at 11–21 is the 'HIGH' region element; it reads PSPTGALHIGG. The 'KMSKS' region signature appears at 263–267; that stretch reads KLSKR. Lysine 266 serves as a coordination point for ATP.

This sequence belongs to the class-I aminoacyl-tRNA synthetase family. Glutamate--tRNA ligase type 1 subfamily. Monomer.

It localises to the cytoplasm. It catalyses the reaction tRNA(Glu) + L-glutamate + ATP = L-glutamyl-tRNA(Glu) + AMP + diphosphate. Its function is as follows. Catalyzes the attachment of glutamate to tRNA(Glu) in a two-step reaction: glutamate is first activated by ATP to form Glu-AMP and then transferred to the acceptor end of tRNA(Glu). This chain is Glutamate--tRNA ligase, found in Amoebophilus asiaticus (strain 5a2).